We begin with the raw amino-acid sequence, 86 residues long: Putative membrane protein insertion efficiency factor (86 aa).

The interval 66–86 is disordered; the sequence is PLHEGGDDPVPPRKNDDNREN.

Belongs to the UPF0161 family.

The protein resides in the cell inner membrane. Could be involved in insertion of integral membrane proteins into the membrane. The polypeptide is Putative membrane protein insertion efficiency factor (Proteus mirabilis (strain HI4320)).